The chain runs to 510 residues: Bifunctional purine biosynthesis protein PurH (510 aa).

The MGS-like domain maps to 1–142 (MRALLSVSDK…KNYKDVMVLC (142 aa)).

Belongs to the PurH family.

The enzyme catalyses (6R)-10-formyltetrahydrofolate + 5-amino-1-(5-phospho-beta-D-ribosyl)imidazole-4-carboxamide = 5-formamido-1-(5-phospho-D-ribosyl)imidazole-4-carboxamide + (6S)-5,6,7,8-tetrahydrofolate. It carries out the reaction IMP + H2O = 5-formamido-1-(5-phospho-D-ribosyl)imidazole-4-carboxamide. The protein operates within purine metabolism; IMP biosynthesis via de novo pathway; 5-formamido-1-(5-phospho-D-ribosyl)imidazole-4-carboxamide from 5-amino-1-(5-phospho-D-ribosyl)imidazole-4-carboxamide (10-formyl THF route): step 1/1. It functions in the pathway purine metabolism; IMP biosynthesis via de novo pathway; IMP from 5-formamido-1-(5-phospho-D-ribosyl)imidazole-4-carboxamide: step 1/1. This chain is Bifunctional purine biosynthesis protein PurH, found in Campylobacter jejuni subsp. jejuni serotype O:2 (strain ATCC 700819 / NCTC 11168).